The sequence spans 421 residues: Zinc metalloproteinase-disintegrin-like lachestatin-1 (421 aa).

The region spanning 10–206 (KYVKLVLVAD…DMPQCILEKP (197 aa)) is the Peptidase M12B domain. 3 disulfides stabilise this stretch: Cys121–Cys201, Cys161–Cys185, and Cys163–Cys168. His146 contacts Zn(2+). Glu147 is a catalytic residue. Residues His150 and His156 each coordinate Zn(2+). One can recognise a Disintegrin domain in the interval 214–299 (PPVCGNYFVE…AECTDRFQRN (86 aa)). Positions 216, 219, 221, 223, 226, and 229 each coordinate Ca(2+). 14 cysteine pairs are disulfide-bonded: Cys217-Cys246, Cys228-Cys241, Cys230-Cys236, Cys240-Cys263, Cys254-Cys260, Cys259-Cys285, Cys272-Cys292, Cys279-Cys310, Cys303-Cys315, Cys322-Cys372, Cys337-Cys383, Cys350-Cys360, Cys367-Cys409, and Cys403-Cys414. A D/ECD-tripeptide motif is present at residues 278–280 (ECD). 5 residues coordinate Ca(2+): Asp280, Met281, Asp283, Asp294, and Arg295. Asn312 carries an N-linked (GlcNAc...) asparagine glycan.

The protein belongs to the venom metalloproteinase (M12B) family. P-III subfamily. P-IIIc sub-subfamily. Homodimer; disulfide-linked. It depends on Zn(2+) as a cofactor. In terms of tissue distribution, expressed by the venom gland.

It localises to the secreted. Its function is as follows. Snake venom zinc metalloprotease that induces apoptosis in vascular endothelial cells (VEC), without degrading the extracellular matrix (it cannot cleave collagen) or inhibiting adhesion of VEC. Has also fibrinogenolytic and hemorrhagic activities. The sequence is that of Zinc metalloproteinase-disintegrin-like lachestatin-1 from Lachesis muta rhombeata (Bushmaster).